Reading from the N-terminus, the 177-residue chain is Large ribosomal subunit protein uL10 (177 aa).

This sequence belongs to the universal ribosomal protein uL10 family. In terms of assembly, part of the ribosomal stalk of the 50S ribosomal subunit. The N-terminus interacts with L11 and the large rRNA to form the base of the stalk. The C-terminus forms an elongated spine to which L12 dimers bind in a sequential fashion forming a multimeric L10(L12)X complex.

In terms of biological role, forms part of the ribosomal stalk, playing a central role in the interaction of the ribosome with GTP-bound translation factors. The sequence is that of Large ribosomal subunit protein uL10 from Variovorax paradoxus (strain S110).